The sequence spans 85 residues: U4-theraphotoxin-Hhn1z (85 aa).

Positions 1-22 (MKMTLIAILTCAAVLVLHTTAA) are cleaved as a signal peptide. A propeptide spanning residues 23 to 48 (EELEAESQLMEVGMPDTELEAVDEER) is cleaved from the precursor. Cystine bridges form between cysteine 52–cysteine 66, cysteine 56–cysteine 77, and cysteine 71–cysteine 82.

It belongs to the neurotoxin 12 (Hwtx-2) family. 02 (Hwtx-2) subfamily. Expressed by the venom gland.

Its subcellular location is the secreted. In terms of biological role, postsynaptic neurotoxin. In Cyriopagopus hainanus (Chinese bird spider), this protein is U4-theraphotoxin-Hhn1z.